Here is a 465-residue protein sequence, read N- to C-terminus: MGPLKAFLFSPFLLRSQSRGVRLVFLLLTLHLGNCVDKADDEDDEDLTVNKTWVLAPKIHEGDITQILNSLLQGYDNKLRPDIGVRPTVIETDVYVNSIGPVDPINMEYTIDIIFAQTWFDSRLKFNSTMKVLMLNSNMVGKIWIPDTFFRNSRKSDAHWITTPNRLLRIWNDGRVLYTLRLTINAECYLQLHNFPMDEHSCPLEFSSYGYPKNEIEYKWKKPSVEVADPKYWRLYQFAFVGLRNSTEITHTISGDYVIMTIFFDLSRRMGYFTIQTYIPCILTVVLSWVSFWINKDAVPARTSLGITTVLTMTTLSTIARKSLPKVSYVTAMDLFVSVCFIFVFAALMEYGTLHYFTSNQKGKTATKDRKLKNKASMTPGLHPGSTLIPMNNISVPQEDDYGYQCLEGKDCASFFCCFEDCRTGSWREGRIHIRIAKIDSYSRIFFPTAFALFNLVYWVGYLYL.

Residues 1 to 35 form the signal peptide; that stretch reads MGPLKAFLFSPFLLRSQSRGVRLVFLLLTLHLGNC. Residues 36–273 lie on the Extracellular side of the membrane; sequence VDKADDEDDE…FDLSRRMGYF (238 aa). N-linked (GlcNAc...) asparagine glycans are attached at residues Asn-50 and Asn-127. Cys-188 and Cys-202 are disulfide-bonded. Residue Asn-245 is glycosylated (N-linked (GlcNAc...) asparagine). The helical transmembrane segment at 274-294 threads the bilayer; sequence TIQTYIPCILTVVLSWVSFWI. At 295–300 the chain is on the cytoplasmic side; sequence NKDAVP. The helical transmembrane segment at 301–320 threads the bilayer; sequence ARTSLGITTVLTMTTLSTIA. The Extracellular portion of the chain corresponds to 321-328; that stretch reads RKSLPKVS. Residues 329 to 349 form a helical membrane-spanning segment; it reads YVTAMDLFVSVCFIFVFAALM. The Cytoplasmic portion of the chain corresponds to 350–444; that stretch reads EYGTLHYFTS…RIAKIDSYSR (95 aa). Residues 445 to 465 form a helical membrane-spanning segment; sequence IFFPTAFALFNLVYWVGYLYL.

The protein belongs to the ligand-gated ion channel (TC 1.A.9) family. Gamma-aminobutyric acid receptor (TC 1.A.9.5) subfamily. GABRG1 sub-subfamily. In terms of assembly, heteropentamer, formed by a combination of alpha (GABRA1-6), beta (GABRB1-3), gamma (GABRG1-3), delta (GABRD), epsilon (GABRE), rho (GABRR1-3), pi (GABRP) and theta (GABRQ) chains, each subunit exhibiting distinct physiological and pharmacological properties. In terms of processing, may be palmitoylated.

It is found in the postsynaptic cell membrane. Its subcellular location is the cell membrane. It catalyses the reaction chloride(in) = chloride(out). In terms of biological role, gamma subunit of the heteropentameric ligand-gated chloride channel gated by gamma-aminobutyric acid (GABA), a major inhibitory neurotransmitter in the brain. GABA-gated chloride channels, also named GABA(A) receptors (GABAAR), consist of five subunits arranged around a central pore and contain GABA active binding site(s) located at the alpha and beta subunit interface(s). When activated by GABA, GABAARs selectively allow the flow of chloride anions across the cell membrane down their electrochemical gradient. Chloride influx into the postsynaptic neuron following GABAAR opening decreases the neuron ability to generate a new action potential, thereby reducing nerve transmission. In Homo sapiens (Human), this protein is Gamma-aminobutyric acid receptor subunit gamma-1.